The following is a 273-amino-acid chain: Putative phosphoenolpyruvate synthase regulatory protein (273 aa).

154-161 provides a ligand contact to ADP; it reads GVSRSGKT.

It belongs to the pyruvate, phosphate/water dikinase regulatory protein family. PSRP subfamily.

The catalysed reaction is [pyruvate, water dikinase] + ADP = [pyruvate, water dikinase]-phosphate + AMP + H(+). It carries out the reaction [pyruvate, water dikinase]-phosphate + phosphate + H(+) = [pyruvate, water dikinase] + diphosphate. Functionally, bifunctional serine/threonine kinase and phosphorylase involved in the regulation of the phosphoenolpyruvate synthase (PEPS) by catalyzing its phosphorylation/dephosphorylation. This Neisseria meningitidis serogroup C (strain 053442) protein is Putative phosphoenolpyruvate synthase regulatory protein.